Here is a 735-residue protein sequence, read N- to C-terminus: Protostadienol synthase A (735 aa).

One copy of the PFTB 1 repeat lies at 129 to 170 (KNEMIRYLLNFVNEDGGWGLWINSPSTVFGTTMNYTMLRILG). The active-site Proton donor is the aspartate 460. PFTB repeat units follow at residues 487 to 528 (LAEA…YDNV), 564 to 604 (MARC…ETVG), and 613 to 660 (CRNA…ALMG).

The protein belongs to the terpene cyclase/mutase family.

The catalysed reaction is (S)-2,3-epoxysqualene = (17Z)-protosta-17(20),24-dien-3beta-ol. Functionally, protostadienol synthase which cyclizes (3S)-oxidosqualene to (17Z)-protosta-17(20),24-dien-3-beta-ol (protostadienol), the biosynthetic precursor of helvolic acid, a secondary metabolite which promotes virulence. This chain is Protostadienol synthase A (PDSA), found in Arthroderma gypseum (strain ATCC MYA-4604 / CBS 118893) (Microsporum gypseum).